Here is a 359-residue protein sequence, read N- to C-terminus: 2-epi-5-epi-valiolone 7-kinase (359 aa).

Positions 28-48 (GGLGEVHTTPSPGHARRPGAG) are disordered.

This sequence belongs to the ROK (NagC/XylR) family.

It catalyses the reaction 2-epi-5-epi-valiolone + ATP = 2-epi-5-epi-valiolone 7-phosphate + ADP + H(+). Catalyzes the conversion of 2-epi-5-epi-valiolone to 2-epi-5-epi-valiolone 7-phosphate. Involved in the biosynthesis of the acarviose moiety of the alpha-glucosidase inhibitor acarbose. The protein is 2-epi-5-epi-valiolone 7-kinase of Actinoplanes sp. (strain ATCC 31044 / CBS 674.73 / SE50/110).